The following is a 386-amino-acid chain: Bifunctional desaturase/conjugase FADX (386 aa).

Positions 1 to 28 (MGAGGRMSVAPNNSKCEKKESRSVKRVP) are disordered. The next 2 membrane-spanning stretches (helical) occupy residues 65-85 (LSFIFYSIATTYFHLLPSPIT) and 87-107 (IAWPVYWAFQGCILTSVWVLG). The short motif at 108–112 (HECGH) is the Histidine box-1 element. The Histidine box-2 signature appears at 144–148 (HRRHH). 3 helical membrane-spanning segments follow: residues 182–202 (ALTLVATLFIGWPLYLAFNVS), 228–248 (IYISDAMIFVAAYVLYKIAMA), and 250–270 (GLAWLVCIYGVPLLIVNALVV). The Histidine box-3 motif lies at 318–322 (HVIHH).

Belongs to the fatty acid desaturase type 1 family. Expressed exclusively in developing seeds.

The protein localises to the endoplasmic reticulum membrane. It carries out the reaction a (9Z,12Z)-octadecadienoyl-containing glycerolipid + 2 Fe(II)-[cytochrome b5] + O2 + 2 H(+) = a (9Z,11E,13E)-octadecatrienoyl-containing glycerolipid + 2 Fe(III)-[cytochrome b5] + 2 H2O. It catalyses the reaction (9Z,12Z,15Z)-octadecatrienoyl-containing glycerolipid + 2 Fe(II)-[cytochrome b5] + O2 + 2 H(+) = a (9Z,11E,13E,15Z)-octadecatetraenoyl-containing glycerolipid + 2 Fe(III)-[cytochrome b5] + 2 H2O. The catalysed reaction is a (9Z)-octadecenoyl-containing glycerolipid + 2 Fe(II)-[cytochrome b5] + O2 + 2 H(+) = a (9Z,12E)-octadecadienoyl-containing glycerolipid + 2 Fe(III)-[cytochrome b5] + 2 H2O. The enzyme catalyses a (9Z)-hexadecenoyl-containing glycerolipid + 2 Fe(II)-[cytochrome b5] + O2 + 2 H(+) = a (9Z,12E)-hexadecadienoyl-containing glycerolipid + 2 Fe(III)-[cytochrome b5] + 2 H2O. The protein operates within lipid metabolism; polyunsaturated fatty acid biosynthesis. In terms of biological role, converts linoleic acid to alpha-eleostearic acid (18:3(9Z,11E,13E)) and alpha-linolenic acid to alpha-parinaric acid (18:4(9Z,11E,13E,15Z)). Converts a single cis double bond at carbon 12 to two conjugated trans bonds at positions 11 and 13. Can also act as a 12(E) desaturase when acting on the monounsaturated fatty acids oleate and palmitoleate, stereoselectively introducing a trans double bond. This chain is Bifunctional desaturase/conjugase FADX, found in Vernicia fordii (Tung).